The chain runs to 476 residues: Bifunctional protein HldE (476 aa).

Positions 1–318 (MAQYSAEFKQ…ENAIHARPET (318 aa)) are ribokinase. 195 to 198 (NMSE) provides a ligand contact to ATP. Asp-264 is an active-site residue. The cytidylyltransferase stretch occupies residues 344–476 (MTNGCFDILH…VIEKIKLLKD (133 aa)).

This sequence in the N-terminal section; belongs to the carbohydrate kinase PfkB family. In the C-terminal section; belongs to the cytidylyltransferase family. As to quaternary structure, homodimer.

The catalysed reaction is D-glycero-beta-D-manno-heptose 7-phosphate + ATP = D-glycero-beta-D-manno-heptose 1,7-bisphosphate + ADP + H(+). It catalyses the reaction D-glycero-beta-D-manno-heptose 1-phosphate + ATP + H(+) = ADP-D-glycero-beta-D-manno-heptose + diphosphate. It functions in the pathway nucleotide-sugar biosynthesis; ADP-L-glycero-beta-D-manno-heptose biosynthesis; ADP-L-glycero-beta-D-manno-heptose from D-glycero-beta-D-manno-heptose 7-phosphate: step 1/4. The protein operates within nucleotide-sugar biosynthesis; ADP-L-glycero-beta-D-manno-heptose biosynthesis; ADP-L-glycero-beta-D-manno-heptose from D-glycero-beta-D-manno-heptose 7-phosphate: step 3/4. It participates in bacterial outer membrane biogenesis; LOS core biosynthesis. Functionally, catalyzes the phosphorylation of D-glycero-D-manno-heptose 7-phosphate at the C-1 position to selectively form D-glycero-beta-D-manno-heptose-1,7-bisphosphate. Its function is as follows. Catalyzes the ADP transfer from ATP to D-glycero-beta-D-manno-heptose 1-phosphate, yielding ADP-D-glycero-beta-D-manno-heptose. The polypeptide is Bifunctional protein HldE (Haemophilus influenzae (strain ATCC 51907 / DSM 11121 / KW20 / Rd)).